The sequence spans 124 residues: Tax1-binding protein 3 homolog (124 aa).

One can recognise a PDZ domain in the interval 18-106; the sequence is AVELHKQEVI…DRAVKFIKQS (89 aa).

Functionally, may regulate a number of protein-protein interactions by competing for PDZ domain binding sites. This is Tax1-binding protein 3 homolog from Caenorhabditis elegans.